Here is a 322-residue protein sequence, read N- to C-terminus: Methionyl-tRNA formyltransferase (322 aa).

Residue 112-115 (SLLP) coordinates (6S)-5,6,7,8-tetrahydrofolate.

This sequence belongs to the Fmt family.

The enzyme catalyses L-methionyl-tRNA(fMet) + (6R)-10-formyltetrahydrofolate = N-formyl-L-methionyl-tRNA(fMet) + (6S)-5,6,7,8-tetrahydrofolate + H(+). Functionally, attaches a formyl group to the free amino group of methionyl-tRNA(fMet). The formyl group appears to play a dual role in the initiator identity of N-formylmethionyl-tRNA by promoting its recognition by IF2 and preventing the misappropriation of this tRNA by the elongation apparatus. The sequence is that of Methionyl-tRNA formyltransferase from Synechococcus sp. (strain JA-2-3B'a(2-13)) (Cyanobacteria bacterium Yellowstone B-Prime).